We begin with the raw amino-acid sequence, 486 residues long: MYIKMATLANGQADNASLSTNGLGSSPGSAGHMNGLSHSPGNPSTIPMKDHDAIKLFIGQIPRNLDEKDLKPLFEEFGKIYELTVLKDRFTGMHKGCAFLTYCERESALKAQSALHEQKTLPGMNRPIQVKPADSESRGGSSCLRQPPSQDRKLFVGMLNKQQSEDDVRRLFEAFGNIEECTILRGPDGNSKGCAFVKYSSHAEAQAAINALHGSQTMPGASSSLVVKFADTDKERTMRRMQQMAGQMGMFNPMAIPFGAYGAYAQALMQQQAALMASVAQGGYLNPMAAFAAAQMQQMAALNMNGLAAAPMTPTSGGSTPPGITAPAVPSIPSPIGVNGFTGLPPQANGQPAAEAVFANGIHPYPAQSPTAADPLQQAYAGVQQYAGPAAYPAAYGQISQAFPQPPPMIPQQQREGPEGCNLFIYHLPQEFGDAELMQMFLPFGFVSFDNPASAQTAIQAMNGFQIGMKRLKVQLKRPKDANRPY.

A sufficient for RNA-binding and MSE-dependent splicing activity region spans residues 1–298; the sequence is MYIKMATLAN…AAFAAAQMQQ (298 aa). Residues 18–28 show a composition bias toward polar residues; it reads LSTNGLGSSPG. Disordered regions lie at residues 18 to 39 and 121 to 149; these read LSTNGLGSSPGSAGHMNGLSHS and LPGMNRPIQVKPADSESRGGSSCLRQPPS. The 82-residue stretch at 54–135 folds into the RRM 1 domain; it reads IKLFIGQIPR…RPIQVKPADS (82 aa). A compositionally biased stretch (polar residues) spans 138 to 149; sequence RGGSSCLRQPPS. The RRM 2 domain maps to 152-232; sequence RKLFVGMLNK…SSLVVKFADT (81 aa). The interval 239 to 258 is necessary for TNNT2 exon 5 inclusion; that stretch reads RRMQQMAGQMGMFNPMAIPF. The region spanning 404-479 is the RRM 3 domain; that stretch reads PQPPPMIPQQ…KRLKVQLKRP (76 aa).

The protein belongs to the CELF/BRUNOL family. As to expression, ubiquitous. Strongly expressed in the cerebellum, hippocampus, amygdala, temporal and frontal cortex and frontal lobes.

The protein localises to the nucleus. Its subcellular location is the cytoplasm. Functionally, RNA-binding protein implicated in the regulation of pre-mRNA alternative splicing. Mediates exon inclusion and/or exclusion in pre-mRNA that are subject to tissue-specific and developmentally regulated alternative splicing. Specifically activates exon 5 inclusion of cardiac isoforms of TNNT2 during heart remodeling at the juvenile to adult transition. Promotes exclusion of both the smooth muscle (SM) and non-muscle (NM) exons in actinin pre-mRNAs. Activates the splicing of MAPT/Tau exon 10. Binds to muscle-specific splicing enhancer (MSE) intronic sites flanking the alternative exon 5 of TNNT2 pre-mRNA. The protein is CUGBP Elav-like family member 4 (CELF4) of Homo sapiens (Human).